A 388-amino-acid chain; its full sequence is Calcium-binding and spermatid-specific protein 1 (388 aa).

The interval 1–20 is disordered; that stretch reads MAEDGLPKIYSHPPAESTKT. Thr-280 is subject to Phosphothreonine; by CK2. Phosphoserine is present on residues Ser-312 and Ser-344.

The protein resides in the cytoplasm. It localises to the mitochondrion inner membrane. Its subcellular location is the cell projection. It is found in the cilium. The protein localises to the flagellum. The protein resides in the cytoplasmic vesicle. It localises to the secretory vesicle. Its subcellular location is the acrosome. Functionally, calcium-binding protein. Essential for maintaining the structural integrity of the sperm flagella. The protein is Calcium-binding and spermatid-specific protein 1 (CABS1) of Bos taurus (Bovine).